A 378-amino-acid polypeptide reads, in one-letter code: Spermidine/putrescine import ATP-binding protein PotA (378 aa).

One can recognise an ABC transporter domain in the interval 18–248; that stretch reads VQLAGIRKCF…PKNLFVTGFI (231 aa). 50 to 57 contributes to the ATP binding site; sequence GPSGCGKT.

It belongs to the ABC transporter superfamily. Spermidine/putrescine importer (TC 3.A.1.11.1) family. As to quaternary structure, the complex is composed of two ATP-binding proteins (PotA), two transmembrane proteins (PotB and PotC) and a solute-binding protein (PotD).

The protein resides in the cell inner membrane. It carries out the reaction ATP + H2O + polyamine-[polyamine-binding protein]Side 1 = ADP + phosphate + polyamineSide 2 + [polyamine-binding protein]Side 1.. Functionally, part of the ABC transporter complex PotABCD involved in spermidine/putrescine import. Responsible for energy coupling to the transport system. The chain is Spermidine/putrescine import ATP-binding protein PotA from Shigella flexneri serotype 5b (strain 8401).